The chain runs to 475 residues: UDP-N-acetylmuramate--L-alanine ligase (475 aa).

121-127 (GTHGKTT) lines the ATP pocket.

This sequence belongs to the MurCDEF family.

Its subcellular location is the cytoplasm. It catalyses the reaction UDP-N-acetyl-alpha-D-muramate + L-alanine + ATP = UDP-N-acetyl-alpha-D-muramoyl-L-alanine + ADP + phosphate + H(+). Its pathway is cell wall biogenesis; peptidoglycan biosynthesis. In terms of biological role, cell wall formation. The sequence is that of UDP-N-acetylmuramate--L-alanine ligase from Salinibacter ruber (strain DSM 13855 / M31).